We begin with the raw amino-acid sequence, 399 residues long: MAGTADLPLEMRRNGLNPTEELAQVRDRDGVIPVGELYGAPAFLVCRYEDVRRIFADSNRFSNAHTPMFAIPSGGDVIEDELAAMRAGNLIGLDPPDHTRLRHILAAEFSVHRLSRLQPRIAEIVDSALDGLEQAGQPADLMDRYALPVSLLVLCELLGVPYADRDELRDRTARLLDLSASAEQRAVAQREDRRYMATLVTRAQEQPGDDLLGILARKIGDNLSTDELISIISLIMLGGHETTASMIGLSVLALLHHPEQAAMMIEDPNCVNSGIEELLRWLSVAHSQPPRMAVTEVQIAGVTIPAGSFVIPSLLAANRDSNLTDRPDDLDITRGVAGHLAFGHGVHFCLGHSLARMTLRTAVPAVLRRFPDLALSPSHDVRLRSASIVLGLEELQLTW.

C349 contributes to the heme binding site.

The protein belongs to the cytochrome P450 family. Heme is required as a cofactor.

Its subcellular location is the cytoplasm. Functionally, may be involved in the biosynthesis of cytokinin phytohormones and in host plant fasciation (leafy gall). The protein is Cytochrome P450 FAS1 (fas1) of Rhodococcoides fascians (Rhodococcus fascians).